We begin with the raw amino-acid sequence, 704 residues long: Neutral ceramidase (704 aa).

The N-terminal stretch at 1-23 is a signal peptide; sequence MANSKMAFLAFLAVSFLCGLVSA. N-linked (GlcNAc...) asparagine glycosylation occurs at asparagine 230. The active-site Nucleophile is serine 276. 3 N-linked (GlcNAc...) asparagine glycosylation sites follow: asparagine 362, asparagine 550, and asparagine 598.

It belongs to the neutral ceramidase family. Post-translationally, N-glycosylated. Widely expressed in different tissues but enriched in neurons at all stages of development.

It localises to the secreted. The enzyme catalyses an N-acylsphing-4-enine + H2O = sphing-4-enine + a fatty acid. Hydrolyzes the sphingolipid ceramide into sphingosine and free fatty acid at an optimal pH of 6.5-7.5. Acts as a key regulator of sphingolipid signaling metabolites by generating sphingosine at the cell surface. Regulates synaptic vesicle exocytosis and trafficking by controlling presynaptic terminal sphingolipid composition. The protein is Neutral ceramidase (CDase) of Drosophila melanogaster (Fruit fly).